Here is a 213-residue protein sequence, read N- to C-terminus: Adenylyl-sulfate kinase (213 aa).

Over residues Met-1–Asp-17 the composition is skewed to basic and acidic residues. The tract at residues Met-1–Ile-20 is disordered. Gly-47–Ser-54 contacts ATP. Ser-121 (phosphoserine intermediate) is an active-site residue.

This sequence belongs to the APS kinase family.

It carries out the reaction adenosine 5'-phosphosulfate + ATP = 3'-phosphoadenylyl sulfate + ADP + H(+). It participates in sulfur metabolism; hydrogen sulfide biosynthesis; sulfite from sulfate: step 2/3. Catalyzes the synthesis of activated sulfate. This is Adenylyl-sulfate kinase from Yersinia pestis.